Here is a 173-residue protein sequence, read N- to C-terminus: N-alpha-acetyltransferase 20 (173 aa).

The region spanning 2–151 is the N-acetyltransferase domain; that stretch reads TTIRRFVCDD…DALDMRKALP (150 aa).

It belongs to the acetyltransferase family. ARD1 subfamily.

Seems to be involved in N-acetylation. In Dictyostelium discoideum (Social amoeba), this protein is N-alpha-acetyltransferase 20 (nat5).